The sequence spans 118 residues: Large ribosomal subunit protein uL18 (118 aa).

It belongs to the universal ribosomal protein uL18 family. Part of the 50S ribosomal subunit; part of the 5S rRNA/L5/L18/L25 subcomplex. Contacts the 5S and 23S rRNAs.

Its function is as follows. This is one of the proteins that bind and probably mediate the attachment of the 5S RNA into the large ribosomal subunit, where it forms part of the central protuberance. This Rickettsia akari (strain Hartford) protein is Large ribosomal subunit protein uL18.